Here is a 440-residue protein sequence, read N- to C-terminus: Frizzled/smoothened-like sans CRD protein D (440 aa).

Positions 1 to 27 (MFIILKFLISFFLICNFFNYNDHFASG) are cleaved as a signal peptide. At 28–85 (QTLPPGFCPSPLIYRNSTNRQNDIENGYLFIGQTNCTSPCPSLIFSENEWHRVYNMSL) the chain is on the extracellular side. Asparagine 43, asparagine 62, and asparagine 82 each carry an N-linked (GlcNAc...) asparagine glycan. A helical membrane pass occupies residues 86 to 106 (IAGTISMFALIFLIITYSPLV). At 107 to 110 (NKYN) the chain is on the cytoplasmic side. Residues 111 to 131 (GYTRHTVGILFLFCGIFLTVT) traverse the membrane as a helical segment. At 132-162 (TDGRQLWDIDLGFEKYCPEPGRFARQSDTKC) the chain is on the extracellular side. A helical membrane pass occupies residues 163 to 183 (LVTAIFFQYGCVTSILWWAAI). The Cytoplasmic segment spans residues 184–200 (SVDLWMTIRKVKISKLQ). A helical transmembrane segment spans residues 201–221 (FITYAVILNIITLILTFAPIA). The Extracellular portion of the chain corresponds to 222–244 (SKQYGYGEAAIGCWLMDLKYQVG). A helical membrane pass occupies residues 245 to 265 (YFWAPVGFCLCVGCVSIVLII). Residues 266–285 (REIYKVSDAIKKKLLAKHLK) are Cytoplasmic-facing. The helical transmembrane segment at 286–306 (PLMLIILMLSEFIYMFIFYSY) threads the bilayer. At 307 to 346 (TTSRRGHYHDVVEKYIRCLFINASNPSICEVDVSISSPAH) the chain is on the extracellular side. N-linked (GlcNAc...) asparagine glycosylation is present at asparagine 328. The helical transmembrane segment at 347 to 367 (FFFHFCMRLMGIEGLIFFGFT) threads the bilayer. The Cytoplasmic portion of the chain corresponds to 368 to 440 (RQTKRIWLRS…IELSGVDSKN (73 aa)). The segment at 395–428 (ISSDEKTSNSSHRTTRGCRETEFGESIEQSNDPE) is disordered.

It belongs to the G-protein coupled receptor Fz/Smo family.

It is found in the membrane. This chain is Frizzled/smoothened-like sans CRD protein D (fscD), found in Dictyostelium discoideum (Social amoeba).